We begin with the raw amino-acid sequence, 400 residues long: MSGRVGDLSPKQAETLAKFRENVQDVLPALPNPDDYFLLRWLRARNFDLQKSEAMLRKYMEFRKTMDIDHILDWQPPEVIQKYMPGGLCGYDRDGCPVWYDIIGPLDPKGLLFSVTKQDLLKTKMRDCERILHECDLQTERLGRKIETIVMIFDCEGLGLKHFWKPLVEVYQEFFGLLEENYPETLKFMLIVKATKLFPVGYNLMKPFLSEDTRRKIVVLGNSWKEGLLKLISPEELPAHFGGTLTDPDGNPKCLTKINYGGEIPKSMYVRDQVKTQYEHSVQISRGSSHQVEYEILFPGCVLRWQFSSDGADIGFGVFLKTKMGERQKAGEMTEVLTSQRYNAHMVPEDGSLTCTEAGVYVLRFDNTYSFVHAKKVSFTVEVLLPDEGMQKYDEELTPI.

The CRAL-TRIO domain maps to 76–249 (PPEVIQKYMP…HFGGTLTDPD (174 aa)). At Ser223 the chain carries Phosphoserine. Residues 275–383 (KTQYEHSVQI…AKKVSFTVEV (109 aa)) form the GOLD domain.

In terms of processing, the N-terminus seems to be blocked. In terms of tissue distribution, detected in a layer of supportive cells in olfactory epithelium, in the apical region of the trachea and in the surface layer of ciliated bronchial epithelium in the lung.

In terms of biological role, probable hydrophobic ligand-binding protein; may play a role in the transport of hydrophobic ligands like tocopherol, squalene and phospholipids. This is SEC14-like protein 3 (Sec14l3) from Rattus norvegicus (Rat).